Consider the following 239-residue polypeptide: L-cystine transport system permease protein TcyL (239 aa).

The region spanning 21–216 is the ABC transmembrane type-1 domain; sequence LPVTLYILTL…AVAVLFEWFF (196 aa). A run of 4 helical transmembrane segments spans residues 25–45, 69–89, 96–116, and 196–216; these read LYILTLSLLFGFVLGLFLALP, IMVQLFIVFYGIPALTGLIGI, PFYAAVATYALSNAAAAAEII, and EVYIALSIVYYAVAVLFEWFF.

The protein belongs to the binding-protein-dependent transport system permease family. In terms of assembly, the complex is composed of two ATP-binding proteins (TcyN), two transmembrane proteins (TcyL and TcyM) and two solute-binding proteins (TcyJ and TcyK).

It localises to the cell membrane. Part of the ABC transporter complex TcyJKLMN involved in L-cystine import. Probably responsible for the translocation of the substrate across the membrane. Is also involved in cystathionine, djenkolate, and S-methylcysteine transport. This chain is L-cystine transport system permease protein TcyL (tcyL), found in Bacillus subtilis (strain 168).